A 131-amino-acid polypeptide reads, in one-letter code: MKFISRLLVACSLLIGLMGFLGADLAQALTPNPILAELNAVDAKLTTDFGQKIDLNNSDIRDFRGLRGFYPNLASEIIKNAPYDTVEEVLDIPGLSETQKSRLEANLGSFTVTEPSIELTSGDDRINPGVY.

The signal sequence occupies residues 1–28 (MKFISRLLVACSLLIGLMGFLGADLAQA). Residues 29–36 (LTPNPILA) constitute a propeptide that is removed on maturation.

This sequence belongs to the PsbU family. PSII is composed of 1 copy each of membrane proteins PsbA, PsbB, PsbC, PsbD, PsbE, PsbF, PsbH, PsbI, PsbJ, PsbK, PsbL, PsbM, PsbT, PsbX, PsbY, PsbZ, Psb30/Ycf12, peripheral proteins PsbO, CyanoQ (PsbQ), PsbU, PsbV and a large number of cofactors. It forms dimeric complexes.

The protein resides in the cellular thylakoid membrane. One of the extrinsic, lumenal subunits of photosystem II (PSII). PSII is a light-driven water plastoquinone oxidoreductase, using light energy to abstract electrons from H(2)O, generating a proton gradient subsequently used for ATP formation. The extrinsic proteins stabilize the structure of photosystem II oxygen-evolving complex (OEC), the ion environment of oxygen evolution and protect the OEC against heat-induced inactivation. May modulate the Cl(-) requirement for oxygen evolution. In Synechocystis sp. (strain ATCC 27184 / PCC 6803 / Kazusa), this protein is Photosystem II extrinsic protein U.